Reading from the N-terminus, the 963-residue chain is Protein translocase subunit SecA (963 aa).

ATP-binding positions include Q87, 105 to 109 (GEGKT), and D524. Residues C946, C948, C957, and H958 each coordinate Zn(2+).

This sequence belongs to the SecA family. Monomer and homodimer. Part of the essential Sec protein translocation apparatus which comprises SecA, SecYEG and auxiliary proteins SecDF-YajC and YidC. Zn(2+) is required as a cofactor.

It is found in the cell inner membrane. Its subcellular location is the cytoplasm. The catalysed reaction is ATP + H2O + cellular proteinSide 1 = ADP + phosphate + cellular proteinSide 2.. Functionally, part of the Sec protein translocase complex. Interacts with the SecYEG preprotein conducting channel. Has a central role in coupling the hydrolysis of ATP to the transfer of proteins into and across the cell membrane, serving both as a receptor for the preprotein-SecB complex and as an ATP-driven molecular motor driving the stepwise translocation of polypeptide chains across the membrane. The chain is Protein translocase subunit SecA from Methylobacterium radiotolerans (strain ATCC 27329 / DSM 1819 / JCM 2831 / NBRC 15690 / NCIMB 10815 / 0-1).